A 201-amino-acid chain; its full sequence is Transgelin (201 aa).

N-acetylalanine is present on A2. The Calponin-homology (CH) domain occupies 24-137 (EELEERLVEW…RTLMALGSLA (114 aa)). At S166 the chain carries Phosphoserine. An N6-acetyllysine modification is found at K172. Residues 175–200 (IGLQMGSNRGASQAGMTGYGRPRQII) form a Calponin-like repeat. Residue S181 is modified to Phosphoserine. R183 carries the omega-N-methylarginine modification.

This sequence belongs to the calponin family.

It localises to the cytoplasm. Actin cross-linking/gelling protein. The sequence is that of Transgelin (Tagln) from Mus musculus (Mouse).